The following is a 352-amino-acid chain: Peptide chain release factor 1 (352 aa).

Q233 carries the N5-methylglutamine modification. The disordered stretch occupies residues 288 to 309 (NAKDRKEQVGSGDRSERIRTYN). Residues 289-306 (AKDRKEQVGSGDRSERIR) are compositionally biased toward basic and acidic residues.

It belongs to the prokaryotic/mitochondrial release factor family. Methylated by PrmC. Methylation increases the termination efficiency of RF1.

The protein resides in the cytoplasm. In terms of biological role, peptide chain release factor 1 directs the termination of translation in response to the peptide chain termination codons UAG and UAA. The chain is Peptide chain release factor 1 from Helicobacter pylori (strain HPAG1).